The primary structure comprises 571 residues: Hemagglutinin-neuraminidase (571 aa).

Topologically, residues 1–26 (MDRAVSRVVLENEEREAKNTWRFVFR) are intravirion. The chain crosses the membrane as a helical span at residues 27 to 47 (IAVLLLIVMTLAISAAALVYS). The Virion surface segment spans residues 48-571 (MGASTPRDLA…LVEILKDDRV (524 aa)). The N-linked (GlcNAc...) asparagine; by host glycan is linked to asparagine 119. The interval 124–152 (GAPVHDPDYIGGIGKELIVDDTSDVTSFY) is important for interaction with fusion/F protein. Cystine bridges form between cysteine 172/cysteine 196, cysteine 186/cysteine 247, and cysteine 238/cysteine 251. The interval 234–239 (NRKSCS) is involved in neuraminidase activity. Residue asparagine 341 is glycosylated (N-linked (GlcNAc...) asparagine; by host). The cysteines at positions 455 and 465 are disulfide-linked. N-linked (GlcNAc...) asparagine; by host glycans are attached at residues asparagine 481 and asparagine 508. A disulfide bridge connects residues cysteine 531 and cysteine 542.

This sequence belongs to the paramyxoviruses hemagglutinin-neuraminidase family. As to quaternary structure, homotetramer; composed of disulfide-linked homodimers. Interacts with F protein trimer. Interacts with host CG-1B; this interaction inhibits viral adsorption and replication rather than internalization.

Its subcellular location is the virion membrane. It is found in the host cell membrane. It catalyses the reaction Hydrolysis of alpha-(2-&gt;3)-, alpha-(2-&gt;6)-, alpha-(2-&gt;8)- glycosidic linkages of terminal sialic acid residues in oligosaccharides, glycoproteins, glycolipids, colominic acid and synthetic substrates.. In terms of biological role, mediates the viral entry into the host cell together with fusion/F protein. Attaches the virus to sialic acid-containing cell receptors and thereby initiates infection. Binding of HN protein to the receptor induces a conformational change that allows the F protein to trigger virion/cell membranes fusion. Neuraminidase activity ensures the efficient spread of the virus by dissociating the mature virions from the neuraminic acid containing glycoproteins. The protein is Hemagglutinin-neuraminidase (HN) of Newcastle disease virus (strain Iba/85) (NDV).